A 387-amino-acid chain; its full sequence is Lipid-A-disaccharide synthase (387 aa).

The protein belongs to the LpxB family.

It catalyses the reaction a lipid X + a UDP-2-N,3-O-bis[(3R)-3-hydroxyacyl]-alpha-D-glucosamine = a lipid A disaccharide + UDP + H(+). The protein operates within bacterial outer membrane biogenesis; LPS lipid A biosynthesis. Condensation of UDP-2,3-diacylglucosamine and 2,3-diacylglucosamine-1-phosphate to form lipid A disaccharide, a precursor of lipid A, a phosphorylated glycolipid that anchors the lipopolysaccharide to the outer membrane of the cell. This is Lipid-A-disaccharide synthase from Glaesserella parasuis serovar 5 (strain SH0165) (Haemophilus parasuis).